Reading from the N-terminus, the 480-residue chain is UDP-N-acetylmuramoyl-L-alanyl-D-glutamate--2,6-diaminopimelate ligase (480 aa).

A UDP-N-acetyl-alpha-D-muramoyl-L-alanyl-D-glutamate-binding site is contributed by serine 21. 98–104 (GTNGKSS) is a binding site for ATP. Residues 144–145 (TT), serine 171, glutamine 177, and arginine 179 each bind UDP-N-acetyl-alpha-D-muramoyl-L-alanyl-D-glutamate. At lysine 211 the chain carries N6-carboxylysine. Meso-2,6-diaminopimelate contacts are provided by residues arginine 372, 396-399 (DNPR), glycine 446, and glutamate 450. Positions 396–399 (DNPR) match the Meso-diaminopimelate recognition motif motif.

Belongs to the MurCDEF family. MurE subfamily. Requires Mg(2+) as cofactor. Carboxylation is probably crucial for Mg(2+) binding and, consequently, for the gamma-phosphate positioning of ATP.

Its subcellular location is the cytoplasm. It catalyses the reaction UDP-N-acetyl-alpha-D-muramoyl-L-alanyl-D-glutamate + meso-2,6-diaminopimelate + ATP = UDP-N-acetyl-alpha-D-muramoyl-L-alanyl-gamma-D-glutamyl-meso-2,6-diaminopimelate + ADP + phosphate + H(+). Its pathway is cell wall biogenesis; peptidoglycan biosynthesis. In terms of biological role, catalyzes the addition of meso-diaminopimelic acid to the nucleotide precursor UDP-N-acetylmuramoyl-L-alanyl-D-glutamate (UMAG) in the biosynthesis of bacterial cell-wall peptidoglycan. The sequence is that of UDP-N-acetylmuramoyl-L-alanyl-D-glutamate--2,6-diaminopimelate ligase from Rickettsia prowazekii (strain Madrid E).